The chain runs to 141 residues: Nucleoside diphosphate kinase (141 aa).

6 residues coordinate ATP: Lys11, Phe59, Arg87, Thr93, Arg104, and Asn114. The active-site Pros-phosphohistidine intermediate is His117.

The protein belongs to the NDK family. As to quaternary structure, homotetramer. The cofactor is Mg(2+).

Its subcellular location is the cytoplasm. It carries out the reaction a 2'-deoxyribonucleoside 5'-diphosphate + ATP = a 2'-deoxyribonucleoside 5'-triphosphate + ADP. The catalysed reaction is a ribonucleoside 5'-diphosphate + ATP = a ribonucleoside 5'-triphosphate + ADP. Major role in the synthesis of nucleoside triphosphates other than ATP. The ATP gamma phosphate is transferred to the NDP beta phosphate via a ping-pong mechanism, using a phosphorylated active-site intermediate. The chain is Nucleoside diphosphate kinase from Burkholderia multivorans (strain ATCC 17616 / 249).